A 473-amino-acid polypeptide reads, in one-letter code: Cysteine--tRNA ligase (473 aa).

Cys27 is a Zn(2+) binding site. Positions 29–39 match the 'HIGH' region motif; the sequence is ITPYDHVHVGH. Residues Cys213, His238, and Glu242 each contribute to the Zn(2+) site. The 'KMSKS' region signature appears at 271–275; that stretch reads KMSKS. ATP is bound at residue Lys274.

Belongs to the class-I aminoacyl-tRNA synthetase family. Zn(2+) is required as a cofactor.

The protein localises to the cytoplasm. The catalysed reaction is tRNA(Cys) + L-cysteine + ATP = L-cysteinyl-tRNA(Cys) + AMP + diphosphate. The polypeptide is Cysteine--tRNA ligase (Pyrobaculum calidifontis (strain DSM 21063 / JCM 11548 / VA1)).